The following is a 32-amino-acid chain: Potassium channel toxin alpha-KTx 10.6 (32 aa).

Intrachain disulfides connect Cys-3–Cys-22, Cys-8–Cys-27, and Cys-12–Cys-29.

Expressed by the venom gland.

It is found in the secreted. In terms of biological role, blocks human voltage-gated potassium (Kv) channels Kv1.2/KCNA2 and Kv1.3/KCNA3. Does not block human Kv1.1 at 100nM concentration. This is Potassium channel toxin alpha-KTx 10.6 from Centruroides bonito (Scorpion).